The sequence spans 163 residues: Nucleotide-binding protein C8J_0350 (163 aa).

The protein belongs to the YajQ family.

Nucleotide-binding protein. The polypeptide is Nucleotide-binding protein C8J_0350 (Campylobacter jejuni subsp. jejuni serotype O:6 (strain 81116 / NCTC 11828)).